Here is a 557-residue protein sequence, read N- to C-terminus: Probable protein kinase UbiB (557 aa).

The Protein kinase domain occupies 121–509 (SFDTVPLASA…RKLQTRVVTA (389 aa)). Residues 127–135 (LASASIAQV) and K154 contribute to the ATP site. The active-site Proton acceptor is the D289. The next 2 helical transmembrane spans lie at 506–526 (VVTA…YGLH) and 535–555 (VPVW…VAWL).

The protein belongs to the ABC1 family. UbiB subfamily.

Its subcellular location is the cell inner membrane. The protein operates within cofactor biosynthesis; ubiquinone biosynthesis [regulation]. Is probably a protein kinase regulator of UbiI activity which is involved in aerobic coenzyme Q (ubiquinone) biosynthesis. The chain is Probable protein kinase UbiB from Xanthomonas axonopodis pv. citri (strain 306).